A 514-amino-acid chain; its full sequence is Chromosomal replication initiator protein DnaA (514 aa).

Positions 1–90 are domain I, interacts with DnaA modulators; that stretch reads MSVELWQQCV…KRSRTPRAAI (90 aa). Positions 91–177 are domain II; that stretch reads VPSQTHVAPP…QVEGALKHTS (87 aa). The domain III, AAA+ region stretch occupies residues 178–394; sequence YLNRTFTFEN…GALKRVIAHS (217 aa). ATP is bound by residues Gly222, Gly224, Lys225, and Thr226. The tract at residues 395-514 is domain IV, binds dsDNA; that stretch reads HFMGRPITIE…YKNLLRTLTT (120 aa).

It belongs to the DnaA family. In terms of assembly, oligomerizes as a right-handed, spiral filament on DNA at oriC.

The protein localises to the cytoplasm. In terms of biological role, plays an essential role in the initiation and regulation of chromosomal replication. ATP-DnaA binds to the origin of replication (oriC) to initiate formation of the DNA replication initiation complex once per cell cycle. Binds the DnaA box (a 9 base pair repeat at the origin) and separates the double-stranded (ds)DNA. Forms a right-handed helical filament on oriC DNA; dsDNA binds to the exterior of the filament while single-stranded (ss)DNA is stabiized in the filament's interior. The ATP-DnaA-oriC complex binds and stabilizes one strand of the AT-rich DNA unwinding element (DUE), permitting loading of DNA polymerase. After initiation quickly degrades to an ADP-DnaA complex that is not apt for DNA replication. Binds acidic phospholipids. This Pseudomonas aeruginosa (strain LESB58) protein is Chromosomal replication initiator protein DnaA.